The following is a 462-amino-acid chain: Hydroxymethylglutaryl-CoA synthase (462 aa).

Catalysis depends on Glu-86, which acts as the Proton donor/acceptor. Cys-120 serves as the catalytic Acyl-thioester intermediate. Cys-120, Thr-211, His-261, Lys-270, Asn-338, and Ser-372 together coordinate (3S)-3-hydroxy-3-methylglutaryl-CoA. His-261 functions as the Proton donor/acceptor in the catalytic mechanism.

It belongs to the thiolase-like superfamily. HMG-CoA synthase family.

The catalysed reaction is acetoacetyl-CoA + acetyl-CoA + H2O = (3S)-3-hydroxy-3-methylglutaryl-CoA + CoA + H(+). It functions in the pathway siderophore biosynthesis. Its function is as follows. Hydroxymethylglutaryl-CoA synthase involved in the biosynthesis of siderophore ferrichrome A which is contributing to organismal virulence. The first step of ferrichrome A biosynthesis is performed by the HMG-CoA synthase hcs1 which catalyzes the generation of HMG-CoA and CoA using acetoacetyl-CoA and acetyl-CoA as substrates. The enoyl-CoA isomerase/hydratase fer4 then catalyzes the conversion of hcs1-produced HMG-CoA to methylglutaconyl-CoA. The acyltransferase fer5 then fuses the fer4-generated methylglutaconyl-CoA with sid1-generated hydroxyornithine to yield methylglutaconyl hydroxyornithine. Methylglutaconyl hydroxyornithine is then available for use by the NRPS fer3 to generate ferrichrome A. The protein is Hydroxymethylglutaryl-CoA synthase of Mycosarcoma maydis (Corn smut fungus).